A 106-amino-acid chain; its full sequence is UPF0473 protein LCABL_08490 (106 aa).

Belongs to the UPF0473 family.

The sequence is that of UPF0473 protein LCABL_08490 from Lacticaseibacillus casei (strain BL23) (Lactobacillus casei).